The primary structure comprises 470 residues: 3-isopropylmalate dehydratase large subunit (470 aa).

[4Fe-4S] cluster is bound by residues C348, C409, and C412.

The protein belongs to the aconitase/IPM isomerase family. LeuC type 1 subfamily. As to quaternary structure, heterodimer of LeuC and LeuD. [4Fe-4S] cluster is required as a cofactor.

The enzyme catalyses (2R,3S)-3-isopropylmalate = (2S)-2-isopropylmalate. It participates in amino-acid biosynthesis; L-leucine biosynthesis; L-leucine from 3-methyl-2-oxobutanoate: step 2/4. Catalyzes the isomerization between 2-isopropylmalate and 3-isopropylmalate, via the formation of 2-isopropylmaleate. This Acidithiobacillus ferrooxidans (strain ATCC 23270 / DSM 14882 / CIP 104768 / NCIMB 8455) (Ferrobacillus ferrooxidans (strain ATCC 23270)) protein is 3-isopropylmalate dehydratase large subunit.